The primary structure comprises 164 residues: MPVLDIAEFAAAIPDYLPIVGLDPGEKTIGVAVSDVTLTVASPLALIKKTKFSEDAATLFQLMGSRKAAGIVIGLPMNMDGTEGVRCQSNRALGRNLLRLQPHIPITFWDERLSTAAVTRVLIEEHDVNRKRRAEVVDKMAAAWILQGALERMRGIAEAAGKGF.

Belongs to the YqgF nuclease family.

It localises to the cytoplasm. Its function is as follows. Could be a nuclease involved in processing of the 5'-end of pre-16S rRNA. The chain is Putative pre-16S rRNA nuclease from Caulobacter sp. (strain K31).